The primary structure comprises 907 residues: Protein translocase subunit SecA (907 aa).

ATP contacts are provided by residues Gln-87, 105–109 (GEGKT), and Asp-506. Basic and acidic residues predominate over residues 834–850 (LEQQREEEAREQAEKMK). A disordered region spans residues 834–907 (LEQQREEEAR…KYKQCHGKIE (74 aa)). A compositionally biased stretch (low complexity) spans 864–875 (QPQPSQQQGEQP). Residues Cys-891, Cys-893, Cys-902, and His-903 each coordinate Zn(2+). Over residues 897–907 (KKYKQCHGKIE) the composition is skewed to basic residues.

The protein belongs to the SecA family. In terms of assembly, monomer and homodimer. Part of the essential Sec protein translocation apparatus which comprises SecA, SecYEG and auxiliary proteins SecDF-YajC and YidC. Zn(2+) serves as cofactor.

The protein resides in the cell inner membrane. It localises to the cytoplasm. It carries out the reaction ATP + H2O + cellular proteinSide 1 = ADP + phosphate + cellular proteinSide 2.. In terms of biological role, part of the Sec protein translocase complex. Interacts with the SecYEG preprotein conducting channel. Has a central role in coupling the hydrolysis of ATP to the transfer of proteins into and across the cell membrane, serving both as a receptor for the preprotein-SecB complex and as an ATP-driven molecular motor driving the stepwise translocation of polypeptide chains across the membrane. The chain is Protein translocase subunit SecA from Alcanivorax borkumensis (strain ATCC 700651 / DSM 11573 / NCIMB 13689 / SK2).